The following is a 344-amino-acid chain: Glyceraldehyde-3-phosphate dehydrogenase (344 aa).

Residues 11 to 12 and Gly110 contribute to the NAD(+) site; that span reads TI. 139–141 is a D-glyceraldehyde 3-phosphate binding site; the sequence is SCN. Cys140 serves as the catalytic Nucleophile. An NAD(+)-binding site is contributed by Arg169. Position 195-196 (195-196) interacts with D-glyceraldehyde 3-phosphate; it reads HG. NAD(+) is bound at residue Gln302.

This sequence belongs to the glyceraldehyde-3-phosphate dehydrogenase family. In terms of assembly, homotetramer.

It localises to the cytoplasm. The enzyme catalyses D-glyceraldehyde 3-phosphate + phosphate + NADP(+) = (2R)-3-phospho-glyceroyl phosphate + NADPH + H(+). The catalysed reaction is D-glyceraldehyde 3-phosphate + phosphate + NAD(+) = (2R)-3-phospho-glyceroyl phosphate + NADH + H(+). It participates in carbohydrate degradation; glycolysis; pyruvate from D-glyceraldehyde 3-phosphate: step 1/5. This is Glyceraldehyde-3-phosphate dehydrogenase from Pyrobaculum neutrophilum (strain DSM 2338 / JCM 9278 / NBRC 100436 / V24Sta) (Thermoproteus neutrophilus).